Reading from the N-terminus, the 1336-residue chain is Vascular endothelial growth factor receptor 1 (1336 aa).

Residues 1–22 form the signal peptide; the sequence is MVSCWDTAVLPCALLGCLLLTG. Topologically, residues 23–758 are extracellular; that stretch reads YCSGSKLKGP…QGTSDKSNLE (736 aa). Ig-like C2-type domains follow at residues 32–121, 151–214, 230–327, 335–421, 429–549, 556–655, and 661–747; these read PELS…KKME, GREL…VNGH, LDVQ…TSVH, SVKH…LTAT, QIYE…RDIR, PNGF…EVLV, and PLLL…AYLT. 2 disulfide bridges follow: cysteine 53–cysteine 107 and cysteine 158–cysteine 207. Residues asparagine 100, asparagine 164, asparagine 196, and asparagine 251 are each glycosylated (N-linked (GlcNAc...) asparagine). Cysteine 252 and cysteine 311 are disulfide-bonded. 8 N-linked (GlcNAc...) asparagine glycosylation sites follow: asparagine 323, asparagine 417, asparagine 474, asparagine 516, asparagine 597, asparagine 625, asparagine 666, and asparagine 713. 2 cysteine pairs are disulfide-bonded: cysteine 454/cysteine 535 and cysteine 577/cysteine 636. Cysteines 682 and 731 form a disulfide. A helical membrane pass occupies residues 759–780; the sequence is LITLTCTCVAATLFWLLLTLFI. The Cytoplasmic segment spans residues 781-1336; sequence RKLKRSSSEV…SVVLYSSPPA (556 aa). Positions 827–1158 constitute a Protein kinase domain; sequence LKLGKSLGRG…ELVEKLGDLL (332 aa). ATP contacts are provided by residues 833–841 and lysine 861; that span reads LGRGAFGKV. Phosphotyrosine; by autocatalysis is present on tyrosine 914. The span at 941-957 shows a compositional bias: basic and acidic residues; sequence KKEKLEPDLEQDQKPRL. The segment at 941 to 982 is disordered; that stretch reads KKEKLEPDLEQDQKPRLDSVSSSESFTSSGFQEDKSVSDVEG. Residues 959-969 show a composition bias toward low complexity; the sequence is SVSSSESFTSS. The active-site Proton acceptor is the aspartate 1022. A phosphotyrosine; by autocatalysis mark is found at tyrosine 1053, tyrosine 1169, tyrosine 1213, tyrosine 1242, tyrosine 1325, and tyrosine 1331. Residues 1304–1326 are disordered; it reads RQEDEDDPELGKESCCSPPPDYN.

It belongs to the protein kinase superfamily. Tyr protein kinase family. CSF-1/PDGF receptor subfamily. In terms of assembly, interacts with VEGFA, VEGFB and PGF. Monomer in the absence of bound VEGFA, VEGFB or PGF. Homodimer in the presence of bound VEGFA, VEGFB and PGF. Can also form a heterodimer with KDR. Interacts (tyrosine phosphorylated) with CBL, CRK, GRB2, NCK1, PIK3R1, PLCG, PSEN1 and PTPN11. Probably interacts with PTPRB. Interacts with RACK1. Identified in a complex with CBL and CD2AP. Post-translationally, N-glycosylated. Ubiquitinated after VEGFA-mediated autophosphorylation, leading to proteolytic degradation. In terms of processing, autophosphorylated on tyrosine residues upon ligand binding. Autophosphorylation occurs in trans, i.e. one subunit of the dimeric receptor phosphorylates tyrosine residues on the other subunit. Phosphorylation at Tyr-1169 is important for interaction with PLCG. Phosphorylation at Tyr-1213 is important for interaction with PIK3R1, PTPN11, GRB2, and PLCG. Phosphorylation at Tyr-1331 is important for endocytosis and for interaction with CBL, NCK1 and CRK. Is probably dephosphorylated by PTPRB.

It is found in the cell membrane. The protein localises to the endosome. The enzyme catalyses L-tyrosyl-[protein] + ATP = O-phospho-L-tyrosyl-[protein] + ADP + H(+). Present in an inactive conformation in the absence of bound ligand. Binding of VEGFA, VEGFB or PGF leads to dimerization and activation by autophosphorylation on tyrosine residues. Tyrosine-protein kinase that acts as a cell-surface receptor for VEGFA, VEGFB and PGF, and plays an essential role in the development of embryonic vasculature, the regulation of angiogenesis, cell survival, cell migration, macrophage function, chemotaxis, and cancer cell invasion. Acts as a positive regulator of postnatal retinal hyaloid vessel regression. May play an essential role as a negative regulator of embryonic angiogenesis by inhibiting excessive proliferation of endothelial cells. Can promote endothelial cell proliferation, survival and angiogenesis in adulthood. Its function in promoting cell proliferation seems to be cell-type specific. Promotes PGF-mediated proliferation of endothelial cells, and proliferation of some types of cancer cells, but does not promote proliferation of normal fibroblasts. Has very high affinity for VEGFA and relatively low protein kinase activity; may function as a negative regulator of VEGFA signaling by limiting the amount of free VEGFA and preventing its binding to KDR. Modulates KDR signaling by forming heterodimers with KDR. Ligand binding leads to the activation of several signaling cascades. Activation of PLCG leads to the production of the cellular signaling molecules diacylglycerol and inositol 1,4,5-trisphosphate and the activation of protein kinase C. Mediates phosphorylation of PIK3R1, the regulatory subunit of phosphatidylinositol 3-kinase, leading to the activation of phosphatidylinositol kinase and the downstream signaling pathway. Mediates activation of MAPK1/ERK2, MAPK3/ERK1 and the MAP kinase signaling pathway, as well as of the AKT1 signaling pathway. Phosphorylates SRC, YES1 and PLCG, and may also phosphorylate CBL. Promotes phosphorylation of AKT1 and PTK2/FAK1. The sequence is that of Vascular endothelial growth factor receptor 1 (Flt1) from Rattus norvegicus (Rat).